The following is a 60-amino-acid chain: Cytotoxin 3 (60 aa).

4 disulfides stabilise this stretch: C3–C21, C14–C38, C42–C53, and C54–C59.

This sequence belongs to the three-finger toxin family. Short-chain subfamily. Type IA cytotoxin sub-subfamily. Monomer in solution; Homodimer and oligomer in the presence of negatively charged lipids forming a pore with a size ranging between 20 and 30 Angstroms. Expressed by the venom gland.

It localises to the secreted. Its subcellular location is the target cell membrane. Its function is as follows. Shows cytolytic activity on many different cells by forming pore in lipid membranes. In vivo, increases heart rate or kills the animal by cardiac arrest. In addition, it binds to heparin with high affinity, interacts with Kv channel-interacting protein 1 (KCNIP1) in a calcium-independent manner, and binds to integrin alpha-V/beta-3 (ITGAV/ITGB3) with moderate affinity. This is Cytotoxin 3 from Naja mossambica (Mozambique spitting cobra).